We begin with the raw amino-acid sequence, 105 residues long: MQVQILALSRSLARAGVDQLVLTLGFPGLPPTKQIEPGLTVRIARMSLPQIRSEITGLVGLGQAWLIGTIREWSGCVAATGGPTSSTCTRRSDLATGRGSDRRPD.

The segment at 80–105 (TGGPTSSTCTRRSDLATGRGSDRRPD) is disordered.

This is an uncharacterized protein from Micromonospora rosea.